The chain runs to 116 residues: MKLCVLTIATLLVTATSLETQKEIAEGNELTREETPSLVEHKEDEAAAASEKRSCIEEWKTCENSCECCGSSTICSSTWAEGKEIKLCKNEGGTFKKVLHFIQKGISKLKSCKEGN.

The signal sequence occupies residues 1-17; the sequence is MKLCVLTIATLLVTATS. Residues 18-53 constitute a propeptide that is removed on maturation; the sequence is LETQKEIAEGNELTREETPSLVEHKEDEAAAASEKR. A disordered region spans residues 25–45; sequence AEGNELTREETPSLVEHKEDE. 4 cysteine pairs are disulfide-bonded: Cys-55–Cys-69, Cys-62–Cys-75, Cys-66–Cys-112, and Cys-68–Cys-88.

It belongs to the neurotoxin 03 (Tx2) family. 02 subfamily. Expressed by the venom gland.

It is found in the secreted. Probable ion channel inhibitor. This Chilobrachys guangxiensis (Chinese earth tiger tarantula) protein is U30-theraphotoxin-Cg1b.